Consider the following 108-residue polypeptide: TYRO protein tyrosine kinase-binding protein (108 aa).

The signal sequence occupies residues methionine 1–alanine 25. Topologically, residues glutamine 26 to proline 36 are extracellular. A helical membrane pass occupies residues glycine 37–valine 57. Aspartate 46 is a Ca(2+) binding site. Residues tyrosine 58–lysine 108 are Cytoplasmic-facing. Residues arginine 75 to glutamine 103 form the ITAM domain. Phosphotyrosine is present on residues tyrosine 86 and tyrosine 97.

Belongs to the TYROBP family. As to quaternary structure, homodimer; disulfide-linked. Homotrimer; disulfide-linked. Homotetramer; disulfide-linked. Homotrimers and homotetramers form when low levels of partner receptors are available and is competitive with assembly with interacting receptors. They may represent alternative oligomerization states or may be intermediates in the receptor assembly process. Binding of a metal cation aids in homooligomerization through coordination of the metal ion by the subunits of the oligomer. Interacts with TREM1. Interacts with TREM2. Interacts with CLECSF5. Interacts with CD300LB and CD300C2. Interacts with CD300E. Interacts (via ITAM domain) with SYK (via SH2 domains); activates SYK mediating neutrophils and macrophages integrin-mediated activation. Interacts with KLRC2. Interacts with CD300H. Interacts with KLRD1. Interacts with SIGLEC1. In terms of processing, following ligand binding by associated receptors, tyrosine phosphorylated in the ITAM domain which leads to activation of additional tyrosine kinases and subsequent cell activation. In terms of tissue distribution, highly expressed in spleen, liver and thymus. Weakly expressed in lymph nodes. Expressed in peripheral blood leukocytes, granulocytes, macrophages, and monocytes. LPS does not increase expression in granulocytes.

The protein resides in the cell membrane. In terms of biological role, adapter protein which non-covalently associates with activating receptors found on the surface of a variety of immune cells to mediate signaling and cell activation following ligand binding by the receptors. TYROBP is tyrosine-phosphorylated in the ITAM domain following ligand binding by the associated receptors which leads to activation of additional tyrosine kinases and subsequent cell activation. Also has an inhibitory role in some cells. Non-covalently associates with activating receptors of the CD300 family to mediate cell activation. Also mediates cell activation through association with activating receptors of the CD200R family. Required for neutrophil activation mediated by integrin. Required for the activation of myeloid cells mediated by the CLEC5A/MDL1 receptor. Associates with natural killer (NK) cell receptors such as the KLRD1/KLRC2 heterodimer to mediate NK cell activation. Associates with TREM1 to mediate activation of neutrophils and monocytes. Associates with TREM2 on monocyte-derived dendritic cells to mediate up-regulation of chemokine receptor CCR7 and dendritic cell maturation and survival. Association with TREM2 mediates cytokine-induced formation of multinucleated giant cells which are formed by the fusion of macrophages. Stabilizes the TREM2 C-terminal fragment (TREM2-CTF) produced by TREM2 ectodomain shedding which suppresses the release of pro-inflammatory cytokines. In microglia, required with TREM2 for phagocytosis of apoptotic neurons. Required with ITGAM/CD11B in microglia to control production of microglial superoxide ions which promote the neuronal apoptosis that occurs during brain development. Promotes pro-inflammatory responses in microglia following nerve injury which accelerates degeneration of injured neurons. Positively regulates the expression of the IRAK3/IRAK-M kinase and IL10 production by liver dendritic cells and inhibits their T cell allosimulatory ability. Negatively regulates B cell proliferation. Required for CSF1-mediated osteoclast cytoskeletal organization. Positively regulates multinucleation during osteoclast development. This is TYRO protein tyrosine kinase-binding protein from Sus scrofa (Pig).